The primary structure comprises 350 residues: Zona pellucida-binding protein 1 (350 aa).

A signal peptide spans methionine 1 to arginine 38. Asparagine 113, asparagine 186, and asparagine 339 each carry an N-linked (GlcNAc...) asparagine glycan.

Belongs to the zona pellucida-binding protein Sp38 family. N-glycosylated. Expressed in testis. Detected in sperm cells.

It is found in the cytoplasmic vesicle. It localises to the secretory vesicle. Its subcellular location is the acrosome. The protein localises to the secreted. The protein resides in the acrosome membrane. Functionally, plays a role in acrosome compaction and sperm morphogenesis. Is implicated in sperm-oocyte interaction during fertilization. The chain is Zona pellucida-binding protein 1 (ZPBP) from Sus scrofa (Pig).